The sequence spans 281 residues: 4-diphosphocytidyl-2-C-methyl-D-erythritol kinase (281 aa).

Lys11 is a catalytic residue. 92 to 102 serves as a coordination point for ATP; that stretch reads LVSAGLAGGSA. Asp132 is a catalytic residue.

It belongs to the GHMP kinase family. IspE subfamily.

The catalysed reaction is 4-CDP-2-C-methyl-D-erythritol + ATP = 4-CDP-2-C-methyl-D-erythritol 2-phosphate + ADP + H(+). It participates in isoprenoid biosynthesis; isopentenyl diphosphate biosynthesis via DXP pathway; isopentenyl diphosphate from 1-deoxy-D-xylulose 5-phosphate: step 3/6. In terms of biological role, catalyzes the phosphorylation of the position 2 hydroxy group of 4-diphosphocytidyl-2C-methyl-D-erythritol. The sequence is that of 4-diphosphocytidyl-2-C-methyl-D-erythritol kinase from Ehrlichia ruminantium (strain Gardel).